The following is a 760-amino-acid chain: MMIRELDIPRDIIGFYEDSGIKELYPPQAEAIEMGLLEKKNLLAAIPTASGKTLLAELAMIKAIREGGKALYIVPLRALASEKFERFKELAPFGIKVGISTGDLDSRADWLGVNDIIVATSEKTDSLLRNGTSWMDEITTVVVDEIHLLDSKNRGPTLEVTITKLMRLNPDVQVVALSATVGNAREMADWLGAALVLSEWRPTDLHEGVLFGDAINFPGSQKKIDRLEKDDAVNLVLDTIKAEGQCLVFESSRRNCAGFAKTASSKVAKILDNDIMIKLAGIAEEVESTGETDTAIVLANCIRKGVAFHHAGLNSNHRKLVENGFRQNLIKVISSTPTLAAGLNLPARRVIIRSYRRFDSNFGMQPIPVLEYKQMAGRAGRPHLDPYGESVLLAKTYDEFAQLMENYVEADAEDIWSKLGTENALRTHVLSTIVNGFASTRQELFDFFGATFFAYQQDKWMLEEVINDCLEFLIDKAMVSETEDIEDASKLFLRGTRLGSLVSMLYIDPLSGSKIVDGFKDIGKSTGGNMGSLEDDKGDDITVTDMTLLHLVCSTPDMRQLYLRNTDYTIVNEYIVAHSDEFHEIPDKLKETDYEWFMGEVKTAMLLEEWVTEVSAEDITRHFNVGEGDIHALADTSEWLMHAAAKLAELLGVEYSSHAYSLEKRIRYGSGLDLMELVGIRGVGRVRARKLYNAGFVSVAKLKGADISVLSKLVGPKVAYNILSGIGVRVNDKHFNSAPISSNTLDTLLDKNQKTFNDFQ.

Residues Q28 and 46–53 (IPTASGKT) contribute to the ATP site. The Helicase ATP-binding domain occupies 33 to 199 (EMGLLEKKNL…WLGAALVLSE (167 aa)). The short motif at 144–147 (DEIH) is the DEAH box element. A Helicase C-terminal domain is found at 232–426 (AVNLVLDTIK…SKLGTENALR (195 aa)).

The protein belongs to the helicase family. Hel308 subfamily. In terms of assembly, monomer.

The enzyme catalyses Couples ATP hydrolysis with the unwinding of duplex DNA by translocating in the 3'-5' direction.. The catalysed reaction is ATP + H2O = ADP + phosphate + H(+). Its function is as follows. DNA-dependent ATPase and 3'-5' DNA helicase that may be involved in repair of stalled replication forks. This is ATP-dependent DNA helicase Hel308 from Methanococcoides burtonii (strain DSM 6242 / NBRC 107633 / OCM 468 / ACE-M).